The sequence spans 197 residues: Interleukin-17C (197 aa).

Positions 1–18 are cleaved as a signal peptide; the sequence is MTLLPGLLFLTWLHTCLA. 2 disulfide bridges follow: Cys-129–Cys-189 and Cys-134–Cys-191.

This sequence belongs to the IL-17 family. Binds to a heterodimer formed by IL17RA and IL17RE.

It is found in the secreted. In terms of biological role, cytokine that plays a crucial role in innate immunity of the epithelium, including to intestinal bacterial pathogens, in an autocrine manner. Stimulates the production of antibacterial peptides and pro-inflammatory molecules for host defense by signaling through the NF-kappa-B and MAPK pathways. Acts synergically with IL22 in inducing the expression of antibacterial peptides, including S100A8, S100A9, REG3A and REG3G. Synergy is also observed with TNF and IL1B in inducing DEFB2 from keratinocytes. Depending on the type of insult, may have both protective and pathogenic properties, either by maintaining epithelial homeostasis after an inflammatory challenge or by promoting inflammatory phenotype. Enhanced IL17C/IL17RE signaling may also lead to greater susceptibility to autoimmune diseases. The sequence is that of Interleukin-17C (IL17C) from Homo sapiens (Human).